We begin with the raw amino-acid sequence, 379 residues long: MKSTKILILGAGPAGFSAAKAALGKCDDITMINSEKYLPYYRPRLNEIIAKNKSIDDILIKKNDWYEKNNIKVITSEFATSIDPNNKLVTLKSGEKIKYEKLIIASGSIANKIKVPHADEIFSLYSYDDALKIKDECKNKGKAFIIGGGILGIELAQAIIDSGTPASIGIILEYPLERQLDRDGGLFLKDKLDRLGIKIYTNSNFEEMGDLIRSSCVITAVGVKPNLDFIKDTEIASKRGILVNDHMETSIKDIYACGDVAEFYGKNPGLINIANKQGEVAGLNACGEDASYSEIIPSPILKVSGISIISCGDIENNKPSKVFRSTQEDKYIVCMLKENKIDAAAVIGDVSLGTKLKKAIDSSKSFDNISSLDAILNNL.

2 cysteine pairs are disulfide-bonded: C26-C286 and C137-C216. FAD contacts are provided by residues 33 to 35, R42, A79, and Y125; that span reads NSE. An FAD-binding site is contributed by D259.

Belongs to the FAD-dependent oxidoreductase family. As to quaternary structure, monomer. FAD is required as a cofactor.

The enzyme catalyses 2 reduced [rubredoxin] + NAD(+) + H(+) = 2 oxidized [rubredoxin] + NADH. Catalyzes the NADH-dependent reduction of rubredoxin (Rd). NADPH is a very poor electron donor compared to NADH. Functions as an intermediate component in the electron transfer chain: NADH-&gt;NROR-&gt;Rd-&gt;FprA1/2. Also functions as an intermediate component in the electron transfer chains from NADH to revRbr and Dfx. Therefore, is a key electron carrier in an efficient multienzyme complex that can scavenge O(2) and reactive oxygen species (ROS), and thus plays an important role in the oxidative stress defense system in C.acetobutylicum, an obligate anaerobic bacterium. This Clostridium acetobutylicum (strain ATCC 824 / DSM 792 / JCM 1419 / IAM 19013 / LMG 5710 / NBRC 13948 / NRRL B-527 / VKM B-1787 / 2291 / W) protein is NADH-rubredoxin oxidoreductase (nroR).